The sequence spans 421 residues: Core-capsid bridging protein (421 aa).

Belongs to the adenoviridae core-capsid bridging protein family. Monomer. Homodimer. Exists in equilibrium between monomers and dimers in solution. Interacts with the histone-like nucleoprotein; this interactions bridge the virus core to the capsid. Interacts with core protein X; this interactions bridge the virus core to the capsid. Interacts with the endosome lysis protein VI; this interactions bridge the virus core to the capsid. Interacts with the peripentonal hexons. Interacts with host NPM1; this interaction might play a role in virus assembly.

The protein resides in the virion. The protein localises to the host nucleus. It localises to the host nucleolus. In terms of biological role, associates loosely with the viral DNA to form an outer shell around the nucleoprotein-DNA complex and links it with the capsid by binding the endosome lysis protein. Dissociates from the viral genome during entry. Might be involved in nuclear capsid assembly of the viral particles through its association with NPM1/nucleophosmin. This is Core-capsid bridging protein from Canine adenovirus serotype 1 (strain RI261) (CAdV-1).